The primary structure comprises 160 residues: Large ribosomal subunit protein eL21B (160 aa).

The segment at 114 to 140 is disordered; that stretch reads AKRKEAKAQGKTVQLRRQPAPPATAHF.

It belongs to the eukaryotic ribosomal protein eL21 family. Component of the large ribosomal subunit (LSU). Mature yeast ribosomes consist of a small (40S) and a large (60S) subunit. The 40S small subunit contains 1 molecule of ribosomal RNA (18S rRNA) and at least 33 different proteins. The large 60S subunit contains 3 rRNA molecules (25S, 5.8S and 5S rRNA) and at least 46 different proteins.

It localises to the cytoplasm. Functionally, component of the ribosome, a large ribonucleoprotein complex responsible for the synthesis of proteins in the cell. The small ribosomal subunit (SSU) binds messenger RNAs (mRNAs) and translates the encoded message by selecting cognate aminoacyl-transfer RNA (tRNA) molecules. The large subunit (LSU) contains the ribosomal catalytic site termed the peptidyl transferase center (PTC), which catalyzes the formation of peptide bonds, thereby polymerizing the amino acids delivered by tRNAs into a polypeptide chain. The nascent polypeptides leave the ribosome through a tunnel in the LSU and interact with protein factors that function in enzymatic processing, targeting, and the membrane insertion of nascent chains at the exit of the ribosomal tunnel. The protein is Large ribosomal subunit protein eL21B (rpl2102) of Schizosaccharomyces pombe (strain 972 / ATCC 24843) (Fission yeast).